A 197-amino-acid chain; its full sequence is dCTP deaminase (197 aa).

105–110 (RSSIAR) is a binding site for dCTP. Catalysis depends on Glu-133, which acts as the Proton donor/acceptor. DCTP-binding residues include Tyr-166 and Gln-177. The disordered stretch occupies residues 172-197 (NKYAGQKDPKPSRLAEELSLEQLRGR). Residues 176–187 (GQKDPKPSRLAE) are compositionally biased toward basic and acidic residues.

Belongs to the dCTP deaminase family. In terms of assembly, homotrimer.

It catalyses the reaction dCTP + H2O + H(+) = dUTP + NH4(+). The protein operates within pyrimidine metabolism; dUMP biosynthesis; dUMP from dCTP (dUTP route): step 1/2. In terms of biological role, catalyzes the deamination of dCTP to dUTP. This chain is dCTP deaminase, found in Thermomicrobium roseum (strain ATCC 27502 / DSM 5159 / P-2).